We begin with the raw amino-acid sequence, 177 residues long: MGIQSSWFYSSKHQSAKREGMVKEGKGGIVSELIYSNNQYSDNQYSDNQAVINRILLPLLRQSGNEARWLLWVSPHKKLSRQWLINSGLPLDKIIQLNRMSSITTVEAMERALASGNYSVVLGWLPTLSGKDTVRLQAAAQKGNALGFIMRPQDVSKETSRAESRSDLLKIHSIHYH.

The ftsZ binding stretch occupies residues 112–118; that stretch reads ALASGNY. The tract at residues 170–177 is lon protease binding; sequence KIHSIHYH.

This sequence belongs to the SulA family. As to quaternary structure, interacts with FtsZ. Is rapidly cleaved and degraded by the Lon protease once DNA damage is repaired.

In terms of biological role, component of the SOS system and an inhibitor of cell division. Accumulation of SulA causes rapid cessation of cell division and the appearance of long, non-septate filaments. In the presence of GTP, binds a polymerization-competent form of FtsZ in a 1:1 ratio, thus inhibiting FtsZ polymerization and therefore preventing it from participating in the assembly of the Z ring. This mechanism prevents the premature segregation of damaged DNA to daughter cells during cell division. The sequence is that of Cell division inhibitor SulA from Photorhabdus laumondii subsp. laumondii (strain DSM 15139 / CIP 105565 / TT01) (Photorhabdus luminescens subsp. laumondii).